The primary structure comprises 799 residues: Probable inorganic carbon transporter subunit DabA (799 aa).

Residues Cys303, Asp305, His479, and Cys494 each coordinate Zn(2+). Residues 574 to 598 form a disordered region; sequence AGAAAERSEALNGADPDKGVSETAS.

This sequence belongs to the inorganic carbon transporter (TC 9.A.2) DabA family. As to quaternary structure, forms a complex with DabB. It depends on Zn(2+) as a cofactor.

The protein localises to the cell membrane. In terms of biological role, part of an energy-coupled inorganic carbon pump. The protein is Probable inorganic carbon transporter subunit DabA of Natronomonas pharaonis (strain ATCC 35678 / DSM 2160 / CIP 103997 / JCM 8858 / NBRC 14720 / NCIMB 2260 / Gabara) (Halobacterium pharaonis).